Reading from the N-terminus, the 37-residue chain is MKVRPSVKKICPKCKVIRRRGVLRVICENPRHKQRQG.

This sequence belongs to the bacterial ribosomal protein bL36 family.

The protein is Large ribosomal subunit protein bL36 of Nitratidesulfovibrio vulgaris (strain ATCC 29579 / DSM 644 / CCUG 34227 / NCIMB 8303 / VKM B-1760 / Hildenborough) (Desulfovibrio vulgaris).